Reading from the N-terminus, the 573-residue chain is DNA polymerase lambda (573 aa).

The region spanning 35–131 (EARGWLSSLR…RLTDTEGFSL (97 aa)) is the BRCT domain. Disordered regions lie at residues 126–204 (TEGF…GPQV) and 214–233 (TGHYPTPPEEDGGPDPAPEA). The interval 263 to 277 (KAYSVQGDKWRALGY) is DNA-binding. The active-site Schiff-base intermediate with DNA is Lys-310. The DNA-binding stretch occupies residues 343 to 346 (GTKT). DCTP-binding positions include Arg-384, 415-418 (SYRR), and 424-427 (GDVD). The segment at 418 to 427 (RGKMTCGDVD) is involved in primer binding. The Mn(2+) site is built by Asp-425, Asp-427, and Asp-488. The DNA-binding stretch occupies residues 464-503 (ENGQQQKYLGVCRLPGPGKRHRRLDIIVVPYCEFACALLY). Asn-511 is a dCTP binding site.

The protein belongs to the DNA polymerase type-X family. Interacts with PCNA. Interacts with PAXX; promoting POLL recruitment to double-strand breaks (DSBs) and stimulation of the end-filling activity of POLL. Interacts with XRCC4; promoting POLL recruitment to double-strand breaks (DSBs) and stimulation of the end-filling activity of POLL. Interacts with NHEJ1/XLF; promoting POLL recruitment to double-strand breaks (DSBs) and stimulation of the end-filling activity of POLL. Requires Mn(2+) as cofactor.

It is found in the nucleus. It catalyses the reaction DNA(n) + a 2'-deoxyribonucleoside 5'-triphosphate = DNA(n+1) + diphosphate. Functionally, DNA polymerase that functions in several pathways of DNA repair. Involved in base excision repair (BER) responsible for repair of lesions that give rise to abasic (AP) sites in DNA. Also contributes to DNA double-strand break repair by non-homologous end joining and homologous recombination. Has both template-dependent and template-independent (terminal transferase) DNA polymerase activities. Also has a 5'-deoxyribose-5-phosphate lyase (dRP lyase) activity. This is DNA polymerase lambda from Mus musculus (Mouse).